A 168-amino-acid polypeptide reads, in one-letter code: Putative postmeiotic segregation increased 2-like protein 3 (168 aa).

One can recognise a KRAB domain in the interval 8–84 (VSFKDVAVDF…EGEFPCQHSP (77 aa)).

The protein belongs to the DNA mismatch repair MutL/HexB family.

This Homo sapiens (Human) protein is Putative postmeiotic segregation increased 2-like protein 3 (PMS2P3).